We begin with the raw amino-acid sequence, 894 residues long: MEKLFVPSFPKTFLNYQTPAKVENSPELHPKSRKKNLSFTKKKEPNIIPDEQFDYLCRNGSLLEAEKALDSLFQQGSKVKRSTYLKLLESCIDSGSIHLGRILHARFGLFTEPDVFVETKLLSMYAKCGCIADARKVFDSMRERNLFTWSAMIGAYSRENRWREVAKLFRLMMKDGVLPDDFLFPKILQGCANCGDVEAGKVIHSVVIKLGMSSCLRVSNSILAVYAKCGELDFATKFFRRMRERDVIAWNSVLLAYCQNGKHEEAVELVKEMEKEGISPGLVTWNILIGGYNQLGKCDAAMDLMQKMETFGITADVFTWTAMISGLIHNGMRYQALDMFRKMFLAGVVPNAVTIMSAVSACSCLKVINQGSEVHSIAVKMGFIDDVLVGNSLVDMYSKCGKLEDARKVFDSVKNKDVYTWNSMITGYCQAGYCGKAYELFTRMQDANLRPNIITWNTMISGYIKNGDEGEAMDLFQRMEKDGKVQRNTATWNLIIAGYIQNGKKDEALELFRKMQFSRFMPNSVTILSLLPACANLLGAKMVREIHGCVLRRNLDAIHAVKNALTDTYAKSGDIEYSRTIFLGMETKDIITWNSLIGGYVLHGSYGPALALFNQMKTQGITPNRGTLSSIILAHGLMGNVDEGKKVFYSIANDYHIIPALEHCSAMVYLYGRANRLEEALQFIQEMNIQSETPIWESFLTGCRIHGDIDMAIHAAENLFSLEPENTATESIVSQIYALGAKLGRSLEGNKPRRDNLLKKPLGQSWIEVRNLIHTFTTGDQSKLCTDVLYPLVEKMSRLDNRSDQYNGELWIEEEGREETCGIHSEKFAMAFGLISSSGASKTTIRILKNLRMCRDCHDTAKYVSKRYGCDILLEDTRCLHHFKNGDCSCKDYW.

PPR repeat units lie at residues 80–110, 114–144, 145–179, 180–214, 215–245, 246–280, 281–315, 316–350, 351–385, 386–416, 417–451, 452–486, 488–522, 523–557, 558–588, 589–623, 624–659, and 660–694; these read KRSTYLKLLESCIDSGSIHLGRILHARFGLF, DVFVETKLLSMYAKCGCIADARKVFDSMRER, NLFTWSAMIGAYSRENRWREVAKLFRLMMKDGVLP, DDFLFPKILQGCANCGDVEAGKVIHSVVIKLGMSS, CLRVSNSILAVYAKCGELDFATKFFRRMRER, DVIAWNSVLLAYCQNGKHEEAVELVKEMEKEGISP, GLVTWNILIGGYNQLGKCDAAMDLMQKMETFGITA, DVFTWTAMISGLIHNGMRYQALDMFRKMFLAGVVP, NAVTIMSAVSACSCLKVINQGSEVHSIAVKMGFID, DVLVGNSLVDMYSKCGKLEDARKVFDSVKNK, DVYTWNSMITGYCQAGYCGKAYELFTRMQDANLRP, NIITWNTMISGYIKNGDEGEAMDLFQRMEKDGKVQ, NTATWNLIIAGYIQNGKKDEALELFRKMQFSRFMP, NSVTILSLLPACANLLGAKMVREIHGCVLRRNLDA, IHAVKNALTDTYAKSGDIEYSRTIFLGMETK, DIITWNSLIGGYVLHGSYGPALALFNQMKTQGITP, NRGTLSSIILAHGLMGNVDEGKKVFYSIANDYHIIP, and ALEHCSAMVYLYGRANRLEEALQFIQEMNIQSETP. The segment at 695–770 is type E motif; that stretch reads IWESFLTGCR…PLGQSWIEVR (76 aa). Residues 771 to 801 are type E(+) motif; sequence NLIHTFTTGDQSKLCTDVLYPLVEKMSRLDN. Positions 803 to 894 are type DYW motif; it reads SDQYNGELWI…NGDCSCKDYW (92 aa).

This sequence belongs to the PPR family. PCMP-H subfamily.

This chain is Pentatricopeptide repeat-containing protein At1g19720 (DYW7), found in Arabidopsis thaliana (Mouse-ear cress).